Here is a 135-residue protein sequence, read N- to C-terminus: Ribonuclease P protein component (135 aa).

Residues 115 to 135 form a disordered region; the sequence is ETEPVSPVSPTSLPQNERGSP. A compositionally biased stretch (polar residues) spans 122-135; the sequence is VSPTSLPQNERGSP.

It belongs to the RnpA family. In terms of assembly, consists of a catalytic RNA component (M1 or rnpB) and a protein subunit.

It carries out the reaction Endonucleolytic cleavage of RNA, removing 5'-extranucleotides from tRNA precursor.. Functionally, RNaseP catalyzes the removal of the 5'-leader sequence from pre-tRNA to produce the mature 5'-terminus. It can also cleave other RNA substrates such as 4.5S RNA. The protein component plays an auxiliary but essential role in vivo by binding to the 5'-leader sequence and broadening the substrate specificity of the ribozyme. This chain is Ribonuclease P protein component, found in Chloroflexus aggregans (strain MD-66 / DSM 9485).